We begin with the raw amino-acid sequence, 281 residues long: DegV domain-containing protein CA_C0948 (281 aa).

The DegV domain occupies 4-280; sequence IAIITDTTAD…PGLVGLVLLE (277 aa). Hexadecanoate contacts are provided by Ser60 and Ser93.

In terms of biological role, may bind long-chain fatty acids, such as palmitate, and may play a role in lipid transport or fatty acid metabolism. The protein is DegV domain-containing protein CA_C0948 of Clostridium acetobutylicum (strain ATCC 824 / DSM 792 / JCM 1419 / IAM 19013 / LMG 5710 / NBRC 13948 / NRRL B-527 / VKM B-1787 / 2291 / W).